Here is a 118-residue protein sequence, read N- to C-terminus: UPF0058 protein MJ1132 (118 aa).

The protein belongs to the UPF0058 family.

The polypeptide is UPF0058 protein MJ1132 (Methanocaldococcus jannaschii (strain ATCC 43067 / DSM 2661 / JAL-1 / JCM 10045 / NBRC 100440) (Methanococcus jannaschii)).